An 82-amino-acid polypeptide reads, in one-letter code: RNA-binding protein Hfq (82 aa).

In terms of domain architecture, Sm spans 10–70 (DLFLNTVRKS…ISTIMPSQPV (61 aa)).

It belongs to the Hfq family. In terms of assembly, homohexamer.

RNA chaperone that binds small regulatory RNA (sRNAs) and mRNAs to facilitate mRNA translational regulation in response to envelope stress, environmental stress and changes in metabolite concentrations. Also binds with high specificity to tRNAs. In Chelativorans sp. (strain BNC1), this protein is RNA-binding protein Hfq.